We begin with the raw amino-acid sequence, 132 residues long: UPF0047 protein YugU (132 aa).

Belongs to the UPF0047 family.

This is UPF0047 protein YugU (yugU) from Bacillus subtilis (strain 168).